The following is a 956-amino-acid chain: Run domain Beclin-1-interacting and cysteine-rich domain-containing protein (956 aa).

The RUN domain maps to 49 to 190 (WSKYGGLERL…PRLLAQIDAS (142 aa)). Positions 50-181 (SKYGGLERLC…CLEAVEQNNP (132 aa)) are interaction with PIK3C3. The residue at position 198 (serine 198) is a Phosphoserine. An interaction with YWHAB region spans residues 205 to 437 (SQSLTALPGS…ITIIVEDPIA (233 aa)). The segment covering 233–242 (SLQSMPQSSH) has biased composition (low complexity). The tract at residues 233 to 423 (SLQSMPQSSH…TNIASRGAAG (191 aa)) is disordered. Phosphoserine is present on residues serine 250 and serine 268. Residues 270 to 319 (AETQTTPAPLPSDSTLAQDSPLTAQEMSDSTLTSPLEASWVSSQNDSPSD) show a composition bias toward polar residues. The tract at residues 302–585 (TSPLEASWVS…DLEIQDADIR (284 aa)) is interaction with UVRAG. The span at 339 to 371 (ASCESHSSNGESSSSHLFSSSSSQKLESAASSL) shows a compositional bias: low complexity. The span at 379–395 (QSQAGSVLRRSSFSEGQ) shows a compositional bias: polar residues. Phosphoserine is present on residues serine 390, serine 412, serine 513, and serine 547. Positions 490-542 (AIELMKCNMMSQCLEEEEVEEEDSDREIQELKQKIRLRRQQIRTKNLLPAYRE) are interaction with BECN1. The segment covering 547–566 (SFRVTSSSSQFSSRDSTQLS) has biased composition (low complexity). The interval 547–579 (SFRVTSSSSQFSSRDSTQLSESGSAEDADDLEI) is disordered. An interaction with CYBA region spans residues 552-609 (SSSSQFSSRDSTQLSESGSAEDADDLEIQDADIRRSAVSNGKSSFSQNLSHCFLHSTS). Over residues 570–579 (SAEDADDLEI) the composition is skewed to acidic residues. Serine 655 is modified (phosphoserine). The interval 656 to 744 (PDDGQHADIY…HENAQMVVPS (89 aa)) is interaction with CARD9. The tract at residues 705–956 (CAGCGIRTDP…ALEATVLETT (252 aa)) is interaction with Rab7.

In terms of assembly, associates with PI3K (PI3KC3/PI3K-III/class III phosphatidylinositol 3-kinase) complex II (PI3KC3-C2) in which the core composed of the catalytic subunit PIK3C3, the regulatory subunit PIK3R4 and BECN1 is associated with UVRAG; in the complex interacts directly with PI3KC3 and UVRAG. Interacts with Rab7 (RAB7A or RAB7B) (GTP-bound form); Rab7 and UVRAG compete for RUBCN binding; can interact simultaneously with Rab7 and the PI3K complex. Interacts with CYBA and CYBB; indicative for the association with the CYBA:CYBB NADPH oxidase heterodimer. Interacts with NOX4 and probably associates with the CYBA:NOX4 complex. Interacts with YWHAB and CARD9 in a competitive and stimulation-dependent manner; RUBCN exchanges interaction from YWHAB to CARD9 upon stimulation with beta-1,3-glucan.

It localises to the late endosome. The protein localises to the lysosome. The protein resides in the early endosome. Functionally, inhibits PIK3C3 activity; under basal conditions negatively regulates PI3K complex II (PI3KC3-C2) function in autophagy. Negatively regulates endosome maturation and degradative endocytic trafficking and impairs autophagosome maturation process. Can sequester UVRAG from association with a class C Vps complex (possibly the HOPS complex) and negatively regulates Rab7 activation. Its function is as follows. Involved in regulation of pathogen-specific host defense of activated macrophages. Following bacterial infection promotes NADH oxidase activity by association with CYBA thereby affecting TLR2 signaling and probably other TLR-NOX pathways. Stabilizes the CYBA:CYBB NADPH oxidase heterodimer, increases its association with TLR2 and its phagosome trafficking to induce antimicrobial burst of ROS and production of inflammatory cytokines. Following fungal or viral infection (implicating CLEC7A (dectin-1)-mediated myeloid cell activation or RIGI-dependent sensing of RNA viruses) negatively regulates pro-inflammatory cytokine production by association with CARD9 and sequestering it from signaling complexes. The polypeptide is Run domain Beclin-1-interacting and cysteine-rich domain-containing protein (Mus musculus (Mouse)).